The primary structure comprises 927 residues: UPF0182 protein bll7333 (927 aa).

The next 7 membrane-spanning stretches (helical) occupy residues 17-37 (AVVG…LLAL), 65-85 (AVVF…NGWL), 134-154 (LALL…QFVY), 185-205 (WMML…LVHG), 220-240 (VIAH…WSFG), 264-284 (VGLP…LAAW), and 297-317 (AAFL…PVLF).

The protein belongs to the UPF0182 family.

It localises to the cell membrane. In Bradyrhizobium diazoefficiens (strain JCM 10833 / BCRC 13528 / IAM 13628 / NBRC 14792 / USDA 110), this protein is UPF0182 protein bll7333.